We begin with the raw amino-acid sequence, 109 residues long: Spermidine export protein MdtI (109 aa).

The next 4 helical transmembrane spans lie at 6 to 26 (WWHAAFLFLAVVLDILANILL), 36 to 56 (WMGILSLIAVLGAFSALAQAV), 63 to 83 (IAYALWGAFGIIATVAAGWIM), and 88 to 108 (LNYKGWGGIALLLLGMVMIKM).

It belongs to the drug/metabolite transporter (DMT) superfamily. Small multidrug resistance (SMR) (TC 2.A.7.1) family. MdtI subfamily. As to quaternary structure, forms a complex with MdtJ.

It is found in the cell inner membrane. Catalyzes the excretion of spermidine. In Photorhabdus laumondii subsp. laumondii (strain DSM 15139 / CIP 105565 / TT01) (Photorhabdus luminescens subsp. laumondii), this protein is Spermidine export protein MdtI.